Reading from the N-terminus, the 449-residue chain is Sensor protein QseC (449 aa).

Residues 1-12 are Cytoplasmic-facing; sequence MKFTQRLSLRVR. Residues 13–33 traverse the membrane as a helical segment; the sequence is LTLIFLILASVTWLLSSFVAW. Over 34–156 the chain is Periplasmic; that stretch reads KQTTDNVDEL…QEWEYREDMA (123 aa). The helical transmembrane segment at 157 to 177 threads the bilayer; the sequence is LAIVAGQLIPWLVALPIMLII. The Cytoplasmic segment spans residues 178–449; it reads MMVLLGRELA…QGGFEAKVSW (272 aa). One can recognise a Histidine kinase domain in the interval 243-449; sequence DAAHELRSPL…QGGFEAKVSW (207 aa). The residue at position 246 (histidine 246) is a Phosphohistidine; by autocatalysis.

Its subcellular location is the cell inner membrane. It catalyses the reaction ATP + protein L-histidine = ADP + protein N-phospho-L-histidine.. Its function is as follows. Member of a two-component regulatory system QseB/QseC. Activates the flagella regulon by activating transcription of FlhDC. May activate QseB by phosphorylation. The chain is Sensor protein QseC (qseC) from Escherichia coli (strain K12).